Here is a 472-residue protein sequence, read N- to C-terminus: GTPase Der (472 aa).

EngA-type G domains lie at 3 to 166 (PVIA…PEQE) and 176 to 349 (IRIG…DSAM). GTP is bound by residues 9-16 (GRPNVGKS), 56-60 (DTGGI), 118-121 (NKID), 182-189 (GRPNVGKS), 229-233 (DTAGV), and 294-297 (NKWD). Positions 350 to 434 (AKWSTNQLTT…PIRFEFRSGE (85 aa)) constitute a KH-like domain. Residues 433–472 (GENPFAGKKNKLSPRQQKKKERLMKHVKKLKHKQKRKKSR) are disordered. Positions 440-472 (KKNKLSPRQQKKKERLMKHVKKLKHKQKRKKSR) are enriched in basic residues.

Belongs to the TRAFAC class TrmE-Era-EngA-EngB-Septin-like GTPase superfamily. EngA (Der) GTPase family. As to quaternary structure, associates with the 50S ribosomal subunit.

Functionally, GTPase that plays an essential role in the late steps of ribosome biogenesis. In Hahella chejuensis (strain KCTC 2396), this protein is GTPase Der.